Reading from the N-terminus, the 1171-residue chain is ATP-dependent helicase/deoxyribonuclease subunit B (1171 aa).

A UvrD-like helicase ATP-binding domain is found at 1–287; that stretch reads MSLRFVIGRA…IPLMEQPRFH (287 aa). 8 to 15 lines the ATP pocket; sequence GRAGSGKS. One can recognise a UvrD-like helicase C-terminal domain in the interval 281–587; sequence MEQPRFHSPA…QFANIPPSLD (307 aa). [4Fe-4S] cluster is bound by residues C805, C1129, C1132, and C1138.

The protein belongs to the helicase family. AddB/RexB type 1 subfamily. Heterodimer of AddA and AddB. The cofactor is Mg(2+). Requires [4Fe-4S] cluster as cofactor.

The heterodimer acts as both an ATP-dependent DNA helicase and an ATP-dependent, dual-direction single-stranded exonuclease. Recognizes the chi site generating a DNA molecule suitable for the initiation of homologous recombination. The AddB subunit has 5' -&gt; 3' nuclease activity but not helicase activity. This is ATP-dependent helicase/deoxyribonuclease subunit B from Bacillus cereus (strain G9842).